The following is a 146-amino-acid chain: uncharacterized protein (146 aa).

A compositionally biased stretch (acidic residues) spans 86 to 96 (EFDSPMDEEEE). The tract at residues 86–124 (EFDSPMDEEEETKPREASLDQTAPKKSKKEELLVKNNNF) is disordered.

This is an uncharacterized protein from Ostreid herpesvirus 1 (isolate France) (OsHV-1).